We begin with the raw amino-acid sequence, 32 residues long: Cytochrome b6-f complex subunit 7 (32 aa).

A helical transmembrane segment spans residues 9–27; sequence AAVFWVLIPVGLAGGALLL.

Belongs to the PetM family. The 4 large subunits of the cytochrome b6-f complex are cytochrome b6, subunit IV (17 kDa polypeptide, PetD), cytochrome f and the Rieske protein, while the 4 small subunits are PetG, PetL, PetM and PetN. The complex functions as a dimer.

The protein localises to the cellular thylakoid membrane. Component of the cytochrome b6-f complex, which mediates electron transfer between photosystem II (PSII) and photosystem I (PSI), cyclic electron flow around PSI, and state transitions. The protein is Cytochrome b6-f complex subunit 7 of Prochlorococcus marinus (strain MIT 9303).